Reading from the N-terminus, the 132-residue chain is Small ribosomal subunit protein uS9 (132 aa).

This sequence belongs to the universal ribosomal protein uS9 family.

The protein is Small ribosomal subunit protein uS9 of Leptospira borgpetersenii serovar Hardjo-bovis (strain JB197).